Consider the following 216-residue polypeptide: MOB kinase activator 1A (216 aa).

An N-acetylserine modification is found at Ser-2. Phosphothreonine occurs at positions 12 and 35. Position 74 is a phosphothreonine; by STK3/MST2 (Thr-74). Zn(2+) is bound by residues Cys-79, Cys-84, His-161, and His-166. Phosphothreonine is present on Thr-181.

It belongs to the MOB1/phocein family. Binds STK38 and STK38L. Interacts with LATS1 and LATS2. Forms a tripartite complex with STK38 and STK3/MST2. Phosphorylated by STK3/MST2 and STK4/MST1 and this phosphorylation enhances its binding to LATS1. Adrenal gland, bone marrow, brain, placenta, prostate, salivary gland, skeletal muscle, testis, thymus, thyroid gland, heart, spinal cord, fetal brain and fetal liver.

Its function is as follows. Activator of LATS1/2 in the Hippo signaling pathway which plays a pivotal role in organ size control and tumor suppression by restricting proliferation and promoting apoptosis. The core of this pathway is composed of a kinase cascade wherein STK3/MST2 and STK4/MST1, in complex with its regulatory protein SAV1, phosphorylates and activates LATS1/2 in complex with its regulatory protein MOB1, which in turn phosphorylates and inactivates YAP1 oncoprotein and WWTR1/TAZ. Phosphorylation of YAP1 by LATS1/2 inhibits its translocation into the nucleus to regulate cellular genes important for cell proliferation, cell death, and cell migration. Stimulates the kinase activity of STK38 and STK38L. Acts cooperatively with STK3/MST2 to activate STK38. This is MOB kinase activator 1A from Homo sapiens (Human).